A 134-amino-acid polypeptide reads, in one-letter code: Small ribosomal subunit protein uS11 (134 aa).

Residues 114-134 (TPVPHNGTRPPRKWFKRQEKR) form a disordered region. The span at 123–134 (PPRKWFKRQEKR) shows a compositional bias: basic residues.

Belongs to the universal ribosomal protein uS11 family. As to quaternary structure, part of the 30S ribosomal subunit. Interacts with proteins S7 and S18. Binds to IF-3.

Located on the platform of the 30S subunit, it bridges several disparate RNA helices of the 16S rRNA. Forms part of the Shine-Dalgarno cleft in the 70S ribosome. The chain is Small ribosomal subunit protein uS11 from Mesomycoplasma hyopneumoniae (strain 232) (Mycoplasma hyopneumoniae).